Consider the following 412-residue polypeptide: MARFLLLLVAVAAAAAVLSLGDAAPSTAEVFWRAVLPESPLPDAFLRLLRPDTSFVVGKAEAAGGAARTGFPFDYTDYRGSDSPTTASGLDLAGDFGEPAPFGYDYSAQGEGGGGGAAAAAGEQVLAVDAGFNYDKYVGARKLRGGSSTAGGENDDEPFGYDYKAPSSGSGTAASTTARGVGTGATTTVFFHEEAVRVGERLPFYFPAATTSALGFLPRRVADSIPFTAAALPAVLALFGVAPDTAEAAGMRETLRTCEWPTLAGESKFCATSLEALVEGAMAALGTRDIAALASTLPRGGAPLQAYAVRAVLPVEGAGFVACHDQAYPYTVYRCHTTGPARAYMVEMEGDGGGDGGEAVTVATVCHTNTSRWNPEHVSFKLLGTKPGGSPVCHLMPYGHIVWAKNVKSSTA.

A signal peptide spans 1–23 (MARFLLLLVAVAAAAAVLSLGDA). Residues 190–406 (FFHEEAVRVG…PYGHIVWAKN (217 aa)) form the BURP domain. Residue Asn-369 is glycosylated (N-linked (GlcNAc...) asparagine).

In terms of tissue distribution, specifically expressed in anthers, in the tapetum and microspores (at protein level).

Functionally, required for pollen development. Probably synthesized in the tapetum, packaged in Ubisch bodies and transported at appropriate stages to the micropsores. This Oryza sativa subsp. japonica (Rice) protein is BURP domain-containing protein 13 (BURP13).